We begin with the raw amino-acid sequence, 106 residues long: uncharacterized protein (106 aa).

3 helical membrane passes run 5–27 (IFVIGVFIVALALSAFHWVGIII), 42–64 (AVAAGLALSLFIFGAFLAYLAYM), and 76–98 (LPYISILLCMALAVISATITNFF).

It localises to the cell membrane. This is an uncharacterized protein from Archaeoglobus fulgidus (strain ATCC 49558 / DSM 4304 / JCM 9628 / NBRC 100126 / VC-16).